The sequence spans 206 residues: MARYTGAVCRLCRREGLKLFLKGDRCYTDKCAFTRRGYAPGVHGQSRKKISNYGLQLREKQKAKRIYGVLEKQFRIYYKRAERIKGISGENLLKLLELRLDNVAYKLGYGSSRKEARQLVTHGHFLVNGKKVDIPSYTLKVNEVVSVSEKSRGTEKFKTFAENPKTLPAWIEANYDNFEAKIVAEPNREDIDTPIKETLIVELYSK.

One can recognise an S4 RNA-binding domain in the interval 98 to 164 (LRLDNVAYKL…EKFKTFAENP (67 aa)).

The protein belongs to the universal ribosomal protein uS4 family. In terms of assembly, part of the 30S ribosomal subunit. Contacts protein S5. The interaction surface between S4 and S5 is involved in control of translational fidelity.

One of the primary rRNA binding proteins, it binds directly to 16S rRNA where it nucleates assembly of the body of the 30S subunit. Its function is as follows. With S5 and S12 plays an important role in translational accuracy. In Clostridium acetobutylicum (strain ATCC 824 / DSM 792 / JCM 1419 / IAM 19013 / LMG 5710 / NBRC 13948 / NRRL B-527 / VKM B-1787 / 2291 / W), this protein is Small ribosomal subunit protein uS4A (rspD1).